We begin with the raw amino-acid sequence, 721 residues long: Polyribonucleotide nucleotidyltransferase (721 aa).

2 residues coordinate Mg(2+): Asp495 and Asp501. One can recognise a KH domain in the interval 562 to 621 (PRLLSFRIDPELIGTVIGPGGRTIKGITERTNTKIDIEDGGIVTIASHDGAAAEEAQKII). Residues 631-699 (GEIFPGVVTR…SRGRINLTLR (69 aa)) enclose the S1 motif domain. The disordered stretch occupies residues 702-721 (GQNGGMSYPEPTPTPVAPLS). The span at 711 to 721 (EPTPTPVAPLS) shows a compositional bias: pro residues.

This sequence belongs to the polyribonucleotide nucleotidyltransferase family. Mg(2+) is required as a cofactor.

The protein resides in the cytoplasm. It carries out the reaction RNA(n+1) + phosphate = RNA(n) + a ribonucleoside 5'-diphosphate. In terms of biological role, involved in mRNA degradation. Catalyzes the phosphorolysis of single-stranded polyribonucleotides processively in the 3'- to 5'-direction. This is Polyribonucleotide nucleotidyltransferase from Prochlorococcus marinus (strain MIT 9301).